Here is a 189-residue protein sequence, read N- to C-terminus: HGPRTase-like protein 2 (189 aa).

Belongs to the purine/pyrimidine phosphoribosyltransferase family. Archaeal HPRT subfamily.

Functionally, may catalyze a purine salvage reaction, the substrate is unknown. The polypeptide is HGPRTase-like protein 2 (Haloarcula marismortui (strain ATCC 43049 / DSM 3752 / JCM 8966 / VKM B-1809) (Halobacterium marismortui)).